A 678-amino-acid polypeptide reads, in one-letter code: Auxin response factor 7 (678 aa).

Residues 128–230 constitute a DNA-binding region (TF-B3); it reads FCKTLTASDT…ELRVGVRRLM (103 aa). Disordered regions lie at residues 360 to 386 and 502 to 547; these read AVSNSQPSPQPPARNKRARPPASNSIA and GVGQ…SRQV. Positions 548–641 constitute a PB1 domain; it reads RSCTKVIMQG…EAKQLTPKSK (94 aa). Residues 643 to 678 form a disordered region; that stretch reads PIIGDAIKPNPNKQSPESDMPHSDLDSTAPVTDKDC.

It belongs to the ARF family. In terms of assembly, homodimers and heterodimers. As to expression, expressed in roots, culms, leaves and young panicles.

It localises to the nucleus. Functionally, auxin response factors (ARFs) are transcriptional factors that bind specifically to the DNA sequence 5'-TGTCTC-3' found in the auxin-responsive promoter elements (AuxREs). In Oryza sativa subsp. japonica (Rice), this protein is Auxin response factor 7 (ARF7).